A 244-amino-acid chain; its full sequence is rRNA adenine N-6-methyltransferase (244 aa).

6 residues coordinate S-adenosyl-L-methionine: N11, I13, G38, E59, D84, and S101.

The protein belongs to the class I-like SAM-binding methyltransferase superfamily. rRNA adenine N(6)-methyltransferase family.

Its function is as follows. Involved in erythromycin resistance. In Lysinibacillus sphaericus (Bacillus sphaericus), this protein is rRNA adenine N-6-methyltransferase (ermG).